A 648-amino-acid chain; its full sequence is Proton myo-inositol cotransporter (648 aa).

The Cytoplasmic segment spans residues 1–76 (MSRKASENVE…AARRQFQQDE (76 aa)). Phosphoserine is present on residues Ser-6, Ser-47, and Ser-50. Residues 77 to 97 (TPAFVYVVAVFSALGGFLFGY) form a helical membrane-spanning segment. Topologically, residues 98–125 (DTGVVSGAMLLLKRQLSLDALWQELLVS) are extracellular. Residues 126–146 (STVGAAAVSALAGGALNGVFG) traverse the membrane as a helical segment. Over 147–148 (RR) the chain is Cytoplasmic. Residues 149–169 (AAILLASALFTAGSAVLAAAN) traverse the membrane as a helical segment. Topologically, residues 170-178 (NKETLLAGR) are extracellular. Residues 179–199 (LVVGLGIGIASMTVPVYIAEV) form a helical membrane-spanning segment. Residues 200–212 (SPPNLRGRLVTIN) lie on the Cytoplasmic side of the membrane. The helical transmembrane segment at 213 to 233 (TLFITGGQFFASVVDGAFSYL) threads the bilayer. Residues 234–239 (QKDGWR) are Extracellular-facing. The helical transmembrane segment at 240-260 (YMLGLAAVPAVIQFFGFLFLP) threads the bilayer. Residues 261-324 (ESPRWLIQKG…RMLSYPPTRR (64 aa)) lie on the Cytoplasmic side of the membrane. Residues 325–345 (ALIVGCGLQMFQQLSGINTIM) traverse the membrane as a helical segment. The Extracellular segment spans residues 346–363 (YYSATILQMSGVEDDRLA). The helical transmembrane segment at 364 to 384 (IWLASVTAFTNFIFTLVGVWL) threads the bilayer. Residues 385–393 (VEKVGRRKL) lie on the Cytoplasmic side of the membrane. Residues 394–414 (TFGSLAGTTVALIILALGFVL) traverse the membrane as a helical segment. Residues 415–508 (SAQVSPRITF…NFCPTPYSWT (94 aa)) lie on the Extracellular side of the membrane. Asn-433, Asn-458, and Asn-485 each carry an N-linked (GlcNAc...) asparagine glycan. The chain crosses the membrane as a helical span at residues 509-529 (ALLGLILYLVFFAPGMGPMPW). Over 530–549 (TVNSEIYPLWARSTGNACSS) the chain is Cytoplasmic. A helical transmembrane segment spans residues 550 to 570 (GINWIFNVLVSLTFLHTAEYL). Residues 571–573 (TYY) are Extracellular-facing. Residues 574–594 (GAFFLYAGFAAVGLLFIYGCL) traverse the membrane as a helical segment. At 595–648 (PETKGKKLEEIESLFDNRLCTCGTSDSDEGRYIEYIRVKGSNYHLSDNDASDVE) the chain is on the cytoplasmic side. Ser-640 and Ser-645 each carry phosphoserine.

This sequence belongs to the major facilitator superfamily. Sugar transporter (TC 2.A.1.1) family. Post-translationally, glycosylated. As to expression, predominantly expressed in the brain.

It is found in the cell membrane. It catalyses the reaction myo-inositol(out) + H(+)(out) = myo-inositol(in) + H(+)(in). In terms of biological role, h(+)-myo-inositol cotransporter. Can also transport related stereoisomers. The polypeptide is Proton myo-inositol cotransporter (Homo sapiens (Human)).